Here is a 268-residue protein sequence, read N- to C-terminus: Undecaprenyl-diphosphatase 1 (268 aa).

7 consecutive transmembrane segments (helical) span residues 5-25 (SIIS…IPVS), 43-63 (GNTF…LVYF), 84-104 (LAVL…HDFI), 107-127 (VLFE…FILL), 184-204 (AAEF…VLDL), 218-238 (LIAV…RSLL), and 247-267 (APFA…LLVI).

This sequence belongs to the UppP family.

The protein resides in the cell inner membrane. The enzyme catalyses di-trans,octa-cis-undecaprenyl diphosphate + H2O = di-trans,octa-cis-undecaprenyl phosphate + phosphate + H(+). Its function is as follows. Catalyzes the dephosphorylation of undecaprenyl diphosphate (UPP). Confers resistance to bacitracin. The protein is Undecaprenyl-diphosphatase 1 of Agrobacterium fabrum (strain C58 / ATCC 33970) (Agrobacterium tumefaciens (strain C58)).